The sequence spans 185 residues: MFRALPAAQRRAARAHLRAGGVLAYATESCFGLGCLPGNARGLRTILRLKGRPNHKGMIVVGRRFADLRRLVRPVDAAGQARLMSRWPGPTTFLLPADRRVLPLLRGRHRTLAVRVSAHHGVAMLTRDLGPLVSTSANFAGKVSLKNAAACRRTFGQEVMVLPGRTGRARRPSAIIDFASGRVLR.

One can recognise a YrdC-like domain in the interval 7–185; that stretch reads AAQRRAARAH…IDFASGRVLR (179 aa).

This sequence belongs to the SUA5 family. TsaC subfamily.

It localises to the cytoplasm. It catalyses the reaction L-threonine + hydrogencarbonate + ATP = L-threonylcarbamoyladenylate + diphosphate + H2O. Required for the formation of a threonylcarbamoyl group on adenosine at position 37 (t(6)A37) in tRNAs that read codons beginning with adenine. Catalyzes the conversion of L-threonine, HCO(3)(-)/CO(2) and ATP to give threonylcarbamoyl-AMP (TC-AMP) as the acyladenylate intermediate, with the release of diphosphate. The sequence is that of Threonylcarbamoyl-AMP synthase from Laribacter hongkongensis (strain HLHK9).